The primary structure comprises 294 residues: Elongation factor Ts (294 aa).

The segment at 82–85 (TDFV) is involved in Mg(2+) ion dislocation from EF-Tu.

Belongs to the EF-Ts family.

It is found in the cytoplasm. Associates with the EF-Tu.GDP complex and induces the exchange of GDP to GTP. It remains bound to the aminoacyl-tRNA.EF-Tu.GTP complex up to the GTP hydrolysis stage on the ribosome. The sequence is that of Elongation factor Ts from Nitrosomonas eutropha (strain DSM 101675 / C91 / Nm57).